The chain runs to 432 residues: Adenylosuccinate synthetase (432 aa).

GTP contacts are provided by residues 13 to 19 (GDEGKGK) and 41 to 43 (GHT). Asp-14 acts as the Proton acceptor in catalysis. Mg(2+) contacts are provided by Asp-14 and Gly-41. IMP is bound by residues 14-17 (DEGK), 39-42 (NAGH), Thr-130, Arg-144, Gln-225, Thr-240, and Arg-304. His-42 (proton donor) is an active-site residue. 300-306 (STTGRPR) contacts substrate. GTP-binding positions include Arg-306, 332–334 (KLD), and 416–418 (STG).

Belongs to the adenylosuccinate synthetase family. As to quaternary structure, homodimer. Mg(2+) is required as a cofactor.

The protein resides in the cytoplasm. It catalyses the reaction IMP + L-aspartate + GTP = N(6)-(1,2-dicarboxyethyl)-AMP + GDP + phosphate + 2 H(+). Its pathway is purine metabolism; AMP biosynthesis via de novo pathway; AMP from IMP: step 1/2. Functionally, plays an important role in the de novo pathway of purine nucleotide biosynthesis. Catalyzes the first committed step in the biosynthesis of AMP from IMP. The polypeptide is Adenylosuccinate synthetase (Nitrosomonas europaea (strain ATCC 19718 / CIP 103999 / KCTC 2705 / NBRC 14298)).